The primary structure comprises 340 residues: GTP 3',8-cyclase (340 aa).

In terms of domain architecture, Radical SAM core spans 8-227 (KLGRPIRDLR…EMIEQNFDIE (220 aa)). GTP is bound at residue Arg-17. Residues Cys-24 and Cys-28 each coordinate [4Fe-4S] cluster. Tyr-30 is an S-adenosyl-L-methionine binding site. Cys-31 provides a ligand contact to [4Fe-4S] cluster. Arg-71 is a GTP binding site. Gly-75 contacts S-adenosyl-L-methionine. Thr-102 is a GTP binding site. Ser-126 provides a ligand contact to S-adenosyl-L-methionine. Lys-163 lines the GTP pocket. S-adenosyl-L-methionine is bound at residue Met-197. Positions 261 and 264 each coordinate [4Fe-4S] cluster. 266–268 (RAR) is a GTP binding site. Cys-278 lines the [4Fe-4S] cluster pocket.

The protein belongs to the radical SAM superfamily. MoaA family. In terms of assembly, monomer and homodimer. [4Fe-4S] cluster is required as a cofactor.

It catalyses the reaction GTP + AH2 + S-adenosyl-L-methionine = (8S)-3',8-cyclo-7,8-dihydroguanosine 5'-triphosphate + 5'-deoxyadenosine + L-methionine + A + H(+). Its pathway is cofactor biosynthesis; molybdopterin biosynthesis. Its function is as follows. Catalyzes the cyclization of GTP to (8S)-3',8-cyclo-7,8-dihydroguanosine 5'-triphosphate. This is GTP 3',8-cyclase from Staphylococcus saprophyticus subsp. saprophyticus (strain ATCC 15305 / DSM 20229 / NCIMB 8711 / NCTC 7292 / S-41).